Reading from the N-terminus, the 389-residue chain is Meiosis-specific protein MEI4 (389 aa).

Residues Met-1–Asp-127 form an interaction with REC114 region.

This sequence belongs to the MEI4L family. In terms of assembly, part of the MCD recombinosome complex, at least composed of IHO1, REC114 and MEI4. Forms a complex with REC114; the interaction is required for MEI4 stability. Interacts (via N-terminal domain) with REC114 (via C-terminal domain). Interacts with IHO1. Expressed in adult testis and brain and in embryonic ovary.

Its subcellular location is the chromosome. Its function is as follows. Required for DNA double-strand breaks (DSBs) formation in unsynapsed regions during meiotic recombination. Probably acts by forming a complex with IHO1 and REC114, which activates DSBs formation in unsynapsed regions, an essential step to ensure completion of synapsis. This Mus musculus (Mouse) protein is Meiosis-specific protein MEI4.